Here is a 238-residue protein sequence, read N- to C-terminus: Ribitol-5-phosphate cytidylyltransferase (238 aa).

Residues 7 to 10 (FAGG) and 80 to 86 (GETGQES) each bind CTP.

The protein belongs to the IspD/TarI cytidylyltransferase family. TarI subfamily.

The enzyme catalyses D-ribitol 5-phosphate + CTP + H(+) = CDP-L-ribitol + diphosphate. Catalyzes the transfer of the cytidylyl group of CTP to D-ribitol 5-phosphate. This is Ribitol-5-phosphate cytidylyltransferase from Vibrio parahaemolyticus serotype O3:K6 (strain RIMD 2210633).